The following is a 3744-amino-acid chain: SAGA complex/NuA4 acetyltransferase complex subunit TRA1 (3744 aa).

An N-acetylserine modification is found at Ser-2. 4 HEAT repeats span residues 2-40, 46-92, 94-131, and 135-172; these read SLTEQIEQFASRFRDDDATLQSRYSTLSELYDIMELLNS, FFLQ…NQTF, PYAMEVLEFLLSVLPKENEENGILCMKVLTTLFKSFKS, and DKLDSFIRIIIQIYKNTPNLINQTFYEAGKAEQGDLDS. The tract at residues 2 to 2598 is HEAT; sequence SLTEQIEQFA…KPYHTRQISS (2597 aa). Ser-172 is modified (phosphoserine). Residues 185–195 are compositionally biased toward basic and acidic residues; it reads FSKNDEEKDFP. Residues 185–212 form a disordered region; the sequence is FSKNDEEKDFPSKQSSTEPRFENSTSSN. Residues 196–212 are compositionally biased toward polar residues; sequence SKQSSTEPRFENSTSSN. HEAT repeat units lie at residues 247-284, 319-357, and 437-477; these read PEFTPLIMNLLNIQIKQQQEAREQAESRGEHFTSISTE, QDYVNFVPDLIIRLLQDCPSELSSARKELLHATRHILST, and KLLL…RFKT. A compositionally biased stretch (basic and acidic residues) spans 522–539; that stretch reads LEPSDDDHLMPQPKKEDI. A disordered region spans residues 522 to 546; the sequence is LEPSDDDHLMPQPKKEDINDSPDVE. Ser-542 is subject to Phosphoserine. HEAT repeat units lie at residues 588-628, 734-771, 779-821, 829-867, 870-910, 919-958, 1074-1112, 1188-1225, 1283-1320, 1369-1408, 1435-1472, 1476-1512, 1693-1734, 1739-1776, 1918-1955, 2115-2155, 2182-2219, 2230-2267, 2269-2307, and 2536-2573; these read RTLM…VFSY, PNFAGILLRFLKGKLKDLGNVDFNTSNVLIRLFKLSFM, INEV…SIGG, RSIKPILQVLLQSLNQMILTARLPHERELYVELCITVPV, SVLA…NLTA, PVIDDVSKALFNLLQPQPFNHAISHNVVRILGKLGGRNRQ, NQENLFLRLLESVFYATSIKELKDDAMDLLNNLLDHFCL, SFIPELAKQFIHLCYDETYYNKRGGVLGIKVLIDNVKS, KVLENTLTDIVCELSNANPKVRNACQKSLHTISNLTGI, TFNEELFRLLQESIVLADAEDESLSTNIQKTTEYSTSEQL, NIRIRILAVFFKTMLKTSPEIINTTYEALKGSLAENSK, ELLQNGLKPLLMNLSDHQKLTVPGLDALSKLLELLIA, LKLK…RFTE, DQNPLLLDFIDFSFSNGIKASYSLKKFIFHNIIASSNK, FPIKVVTQVFVALLRSSHVEARYLVKQSLDVLTPVLHE, ELGL…LDSE, ENLPTIQNLLEKCIKSDHHDVQEALQKVLQVIMKAIKA, SPGKTFIQMLTSVITQDLQETSSVTAGVTLAWVLFMNF, DNIVPLLTPLMKTFSKLCKDHLSISQPKDAMALEEARIT, and IISSDFIDSLIEIFYQDPKAIHRAWVTLFPQVYKSIPK. Positions 2599–3744 are head; sequence RTNVINMLLD…RTDVNFMPWF (1146 aa). In terms of domain architecture, FAT spans 2622 to 3177; that stretch reads LVKYLAISYN…HFQLRTTKED (556 aa). One can recognise a PI3K/PI4K catalytic domain in the interval 3374–3732; sequence FLPTVDFVRG…CIGSAVSPRN (359 aa). Residues 3380-3386 form a G-loop region; that stretch reads FVRGTHS. Residues 3563–3571 are catalytic loop; the sequence is MINNRTPHK. The segment at 3600–3625 is activation loop; the sequence is LKNHDLSLPPDSPIFHNNEPVPFRLT. An FATC domain is found at 3712-3744; the sequence is TPTVTTQFILDCIGSAVSPRNLARTDVNFMPWF.

Belongs to the PI3/PI4-kinase family. TRA1 subfamily. In terms of assembly, component of the 1.8 MDa SAGA (Spt-Ada-Gcn5 acetyltransferase) complex, which is composed of 19 subunits TRA1, SPT7, TAF5, NGG1/ADA3, SGF73, SPT20/ADA5, SPT8, TAF12, TAF6, HFI1/ADA1, UBP8, GCN5, ADA2, SPT3, SGF29, TAF10, TAF9, SGF11 and SUS1. The SAGA complex is composed of 4 modules, namely the HAT (histone acetyltransferase) module (GCN5, ADA2, NGG1/ADA3 and SGF29), the DUB (deubiquitinating) module (UBP8, SGF11, SGF73 and SUS1), the core or TAF (TBP-associated factor) module (TAF5, TAF6, TAF9, TAF10 and TAF12), and the Tra1 or SPT (Suppressor of Ty) module (TRA1, HFI1/ADA1, SPT3, SPT7, SPT8 and SPT20/ADA5). The Tra1/SPT module binds activators, the core module recruits TBP (TATA-binding protein), the HAT module contains the histone H3 acetyltransferase GCN5, and the DUB module comprises the histone H2B deubiquitinase UBP8. Also identified in an altered form of SAGA, named SALSA (SAGA altered, Spt8 absent) or SLIK (SAGA-like) complex, which contains a C-terminal truncated form of SPT7 and is missing SPT8. However, it has been shown that the SAGA and SAGA-like SALSA/SLIK transcriptional coactivators are structurally and biochemically equivalent. Component of the NuA4 acetyltransferase complex, which consists of the catalytic subunit ESA1 and the 12 non-catalytic subunits ACT1, ARP4, EAF1/VID21, SWC4/EAF2, EAF3, EAF5, EAF6, EAF7, EPL1, TRA1, YAF9 and YNG2. TRA1 is the scaffold subunit for binding to a variety of transcription activators or transcription factors to recruit NuA4 for targeted gene activation. Identified in the Ada.spt complex with NGG1/ADA3 and SPT7.

It is found in the nucleus. Essential scaffold subunit of the transcription coactivator SAGA complex. SAGA acts as a general cofactor required for essentially all RNA polymerase II transcription. At the promoters, SAGA is required for transcription pre-initiation complex (PIC) recruitment. It influences RNA polymerase II transcriptional activity through different activities such as TBP interaction (via core/TAF module) and promoter selectivity, interaction with transcription activators (via Tra1/SPT module), and chromatin modification through histone acetylation (via HAT module) and deubiquitination (via DUB module). SAGA preferentially acetylates histones H3 (to form H3K9ac, H3K14ac, H3K18ac and H3K23ac) and H2B and deubiquitinates histone H2B. SAGA interacts with DNA via upstream activating sequences (UASs). Also identified in a modified version of SAGA named SALSA or SLIK. The cleavage of SPT7 and the absence of the SPT8 subunit in SLIK neither drive any major conformational differences in its structure compared with SAGA, nor significantly affect HAT, DUB, or DNA-binding activities. Component of the NuA4 histone H4/H2A acetyltransferase involved in transcription and DNA repair. The chain is SAGA complex/NuA4 acetyltransferase complex subunit TRA1 from Saccharomyces cerevisiae (strain ATCC 204508 / S288c) (Baker's yeast).